The primary structure comprises 725 residues: N-alpha-acetyltransferase 35, NatC auxiliary subunit (725 aa).

The tract at residues 548–573 (ERIMEEQQKGRSSKKTKKKKKVRPLS) is disordered. Residues 558–571 (RSSKKTKKKKKVRP) are compositionally biased toward basic residues.

The protein belongs to the MAK10 family. In terms of assembly, component of the N-terminal acetyltransferase C (NatC) complex, which is composed of NAA35, NAA38 and NAA30. As to expression, expressed in primary spermatocytes, basal epidermis, interstitial fibroblasts of skeletal muscle, and intestinal crypts.

It is found in the cytoplasm. Its function is as follows. Auxillary component of the N-terminal acetyltransferase C (NatC) complex which catalyzes acetylation of N-terminal methionine residues. N-terminal acetylation protects proteins from ubiquitination and degradation by the N-end rule pathway. Involved in regulation of apoptosis and proliferation of smooth muscle cells. This is N-alpha-acetyltransferase 35, NatC auxiliary subunit (Naa35) from Rattus norvegicus (Rat).